Consider the following 206-residue polypeptide: MMSHKKQDAFQGLIDALKVLPNVGPKSAQRIAYHLLQHKRKEAEKLVDALQTALKQVYHCAMCNTFCEGGLCDICADETRDGRRLMVVHMPADVSNMEAANCHDGLYFVLMGQINTALGMDVSAIALDRLAQRLGGGEVEEIIIATAFTAEGNATAYVLSEFFKNLPYKVSRLSQGIPLGGELEYVDAGTLAQAVYERRLIKEGGA.

A C4-type zinc finger spans residues 60 to 75 (CAMCNTFCEGGLCDIC). The 96-residue stretch at 83 to 178 (RRLMVVHMPA…KVSRLSQGIP (96 aa)) folds into the Toprim domain.

It belongs to the RecR family.

May play a role in DNA repair. It seems to be involved in an RecBC-independent recombinational process of DNA repair. It may act with RecF and RecO. In Neisseria meningitidis serogroup B (strain ATCC BAA-335 / MC58), this protein is Recombination protein RecR.